The primary structure comprises 258 residues: Ribosomal RNA small subunit methyltransferase A (258 aa).

Residues His-13, Leu-15, Gly-40, Glu-61, Asp-86, and Asn-106 each coordinate S-adenosyl-L-methionine.

Belongs to the class I-like SAM-binding methyltransferase superfamily. rRNA adenine N(6)-methyltransferase family. RsmA subfamily.

Its subcellular location is the cytoplasm. It catalyses the reaction adenosine(1518)/adenosine(1519) in 16S rRNA + 4 S-adenosyl-L-methionine = N(6)-dimethyladenosine(1518)/N(6)-dimethyladenosine(1519) in 16S rRNA + 4 S-adenosyl-L-homocysteine + 4 H(+). Functionally, specifically dimethylates two adjacent adenosines (A1518 and A1519) in the loop of a conserved hairpin near the 3'-end of 16S rRNA in the 30S particle. May play a critical role in biogenesis of 30S subunits. The polypeptide is Ribosomal RNA small subunit methyltransferase A (Coxiella burnetii (strain RSA 331 / Henzerling II)).